The primary structure comprises 776 residues: DNA topoisomerase 1 (776 aa).

One can recognise a Toprim domain in the interval 1 to 111 (MKLVIVESPA…VKSDDFFKRV (111 aa)). Residues Glu7 and Asp80 each contribute to the Mg(2+) site. In terms of domain architecture, Topo IA-type catalytic spans 132–568 (DANLVNAQQA…FWSGFNHNIE (437 aa)). Residues 166 to 171 (SAGRVQ) are interaction with DNA. The O-(5'-phospho-DNA)-tyrosine intermediate role is filled by Tyr304. The C4-type zinc finger occupies 600 to 627 (CPSCKTGELSLKLGKFGAFLACSNYPEC).

It belongs to the type IA topoisomerase family. In terms of assembly, monomer. Requires Mg(2+) as cofactor.

The enzyme catalyses ATP-independent breakage of single-stranded DNA, followed by passage and rejoining.. Releases the supercoiling and torsional tension of DNA, which is introduced during the DNA replication and transcription, by transiently cleaving and rejoining one strand of the DNA duplex. Introduces a single-strand break via transesterification at a target site in duplex DNA. The scissile phosphodiester is attacked by the catalytic tyrosine of the enzyme, resulting in the formation of a DNA-(5'-phosphotyrosyl)-enzyme intermediate and the expulsion of a 3'-OH DNA strand. The free DNA strand then undergoes passage around the unbroken strand, thus removing DNA supercoils. Finally, in the religation step, the DNA 3'-OH attacks the covalent intermediate to expel the active-site tyrosine and restore the DNA phosphodiester backbone. This chain is DNA topoisomerase 1, found in Rickettsia felis (strain ATCC VR-1525 / URRWXCal2) (Rickettsia azadi).